Reading from the N-terminus, the 152-residue chain is Deoxyuridine 5'-triphosphate nucleotidohydrolase (152 aa).

Substrate contacts are provided by residues 71 to 73, Asn84, 88 to 90, and Met98; these read RSG and LID.

It belongs to the dUTPase family. Mg(2+) serves as cofactor.

The catalysed reaction is dUTP + H2O = dUMP + diphosphate + H(+). It participates in pyrimidine metabolism; dUMP biosynthesis; dUMP from dCTP (dUTP route): step 2/2. In terms of biological role, this enzyme is involved in nucleotide metabolism: it produces dUMP, the immediate precursor of thymidine nucleotides and it decreases the intracellular concentration of dUTP so that uracil cannot be incorporated into DNA. This Shewanella pealeana (strain ATCC 700345 / ANG-SQ1) protein is Deoxyuridine 5'-triphosphate nucleotidohydrolase.